Consider the following 250-residue polypeptide: MTVKKLYFIPAGRCMLDHSSVNSALTPGKLLNLPVWCYLLETEEGPILVDTGMPESAVNNEGLFNGTFVEGQILPKMTEEDRIVNILKRVGYEPDDLLYIISSHLHFDHAGGNGAFTNTPIIVQRTEYEAALHREEYMKECILPHLNYKIIEGDYEVVPGVQLLYTPGHSPGHQSLFIETEQSGSVLLTIDASYTKENFEDEVPFAGFDPELALSSIKRLKEVVKKEKPIIFFGHDIEQEKSCRVFPEYI.

Residues His104, His106, Asp108, His109, His169, Asp191, and His235 each contribute to the Zn(2+) site.

It belongs to the metallo-beta-lactamase superfamily. Monomer. Zn(2+) serves as cofactor.

It catalyses the reaction an N-acyl-L-homoserine lactone + H2O = an N-acyl-L-homoserine + H(+). Functionally, catalyzes hydrolysis of N-hexanoyl-(S)-homoserine lactone, but not the R-enantiomer. Hydrolyzes short- and long-chain N-acyl homoserine lactones with or without 3-oxo substitution at C3, has maximum activity on C10-AHL. The polypeptide is N-acyl homoserine lactonase (Bacillus thuringiensis subsp. indiana).